The sequence spans 594 residues: Glutamate decarboxylase 1 (594 aa).

Residues 1 to 13 (MASSTPSSSATSS) show a composition bias toward low complexity. Residues 1–23 (MASSTPSSSATSSNAGADPNTTN) form a disordered region. S78 is modified (phosphoserine). 190–192 (QLS) is a 4-aminobutanoate binding site. An N6-(pyridoxal phosphate)lysine modification is found at K405. R567 contributes to the 4-aminobutanoate binding site.

The protein belongs to the group II decarboxylase family. As to quaternary structure, homodimer. Pyridoxal 5'-phosphate is required as a cofactor.

It catalyses the reaction L-glutamate + H(+) = 4-aminobutanoate + CO2. Catalyzes the synthesis of the inhibitory neurotransmitter gamma-aminobutyric acid (GABA) with pyridoxal 5'-phosphate as cofactor. The sequence is that of Glutamate decarboxylase 1 (GAD1) from Bos taurus (Bovine).